Reading from the N-terminus, the 146-residue chain is Large ribosomal subunit protein uL15 (146 aa).

Residues 1–54 (MKLHELKPAAGSKKAPKRIGRGTGSGLGRNAGKGEKGQNARSGGGVRPGFEGGQ) form a disordered region. Composition is skewed to gly residues over residues 21-31 (RGTGSGLGRNA) and 42-52 (SGGGVRPGFEG).

Belongs to the universal ribosomal protein uL15 family. Part of the 50S ribosomal subunit.

In terms of biological role, binds to the 23S rRNA. This chain is Large ribosomal subunit protein uL15, found in Clostridium beijerinckii (strain ATCC 51743 / NCIMB 8052) (Clostridium acetobutylicum).